The following is a 308-amino-acid chain: UPF0282 protein STK_23220 (308 aa).

The protein belongs to the UPF0282 family.

The polypeptide is UPF0282 protein STK_23220 (Sulfurisphaera tokodaii (strain DSM 16993 / JCM 10545 / NBRC 100140 / 7) (Sulfolobus tokodaii)).